We begin with the raw amino-acid sequence, 140 residues long: MAVERTFSMIKPDATRRNLTGAITKMLEDAGLRVIASKRVWMSQREAEKFYAVHKERAFFSELVELMSSGPTIVQVLEGENAIAKNREVMGATNPEDAQEGTIRKVHALSIGENSVHGSDSAETAKTEIAFWFSEVEIVG.

Residues lysine 11, phenylalanine 59, arginine 87, threonine 93, arginine 104, and asparagine 114 each coordinate ATP. The Pros-phosphohistidine intermediate role is filled by histidine 117.

This sequence belongs to the NDK family. Homotetramer. Mg(2+) is required as a cofactor.

The protein localises to the cytoplasm. The catalysed reaction is a 2'-deoxyribonucleoside 5'-diphosphate + ATP = a 2'-deoxyribonucleoside 5'-triphosphate + ADP. It catalyses the reaction a ribonucleoside 5'-diphosphate + ATP = a ribonucleoside 5'-triphosphate + ADP. Major role in the synthesis of nucleoside triphosphates other than ATP. The ATP gamma phosphate is transferred to the NDP beta phosphate via a ping-pong mechanism, using a phosphorylated active-site intermediate. The protein is Nucleoside diphosphate kinase of Bartonella henselae (strain ATCC 49882 / DSM 28221 / CCUG 30454 / Houston 1) (Rochalimaea henselae).